Here is a 183-residue protein sequence, read N- to C-terminus: Ribulose bisphosphate carboxylase small subunit, chloroplastic 7 (183 aa).

Residues 1-43 constitute a chloroplast transit peptide; sequence MAAAMMNKTVVVGKESVKGGVAPKVAMSRGGFLNSGIMKKDRD.

It belongs to the RuBisCO small chain family. In terms of assembly, heterohexadecamer of 8 large and 8 small subunits.

Its subcellular location is the plastid. It localises to the chloroplast. Functionally, ruBisCO catalyzes two reactions: the carboxylation of D-ribulose 1,5-bisphosphate, the primary event in carbon dioxide fixation, as well as the oxidative fragmentation of the pentose substrate. Both reactions occur simultaneously and in competition at the same active site. Although the small subunit is not catalytic it is essential for maximal activity. The sequence is that of Ribulose bisphosphate carboxylase small subunit, chloroplastic 7 from Acetabularia peniculus (Green alga).